A 184-amino-acid polypeptide reads, in one-letter code: Cobalamin adenosyltransferase (184 aa).

Residues 1–21 (MGNRLSKIATRTGDAGTTGLG) are disordered. ATP-binding positions include 10-13 (TRTG), 18-19 (TG), lysine 28, 130-134 (RRAER), and asparagine 154.

The protein belongs to the Cob(I)alamin adenosyltransferase family. Homotrimer.

The catalysed reaction is 2 cob(II)alamin + AH2 + 2 ATP = 2 adenosylcob(III)alamin + 2 triphosphate + A + 2 H(+). Its activity is regulated as follows. Is potentially allosterically regulated by GTP/GDP, which enhances its affinity for AdoCbl by 5-fold. Binds cob(II)alamin weakly in the absence of ATP. The presence of ATP (but not GTP or GDP) increases the affinity of cob(II)alamin for the enzyme, and stoichiometric binding is observed. GTP blocks the transfer of cob(II)alamin to IcmF from ATR, thus averting its reconstitution with inactive cofactor. Adenosyltransferase that catalyzes the conversion of cob(II)alamin to adenosylcob(III)alamin (AdoCbl) in the presence of ATP and an electron donor. Acts as an accessory protein of IcmF that functions in cofactor repair, since IcmF is prone to inactivation during catalytic turnover due to the occasional loss of the 5'-deoxyadenosine moiety and formation of the inactive cob(II)alamin cofactor in its active site. Thus, receives and repairs the inactive cofactor, which is then reloaded onto IcmF in a GTPase-gated step. This chain is Cobalamin adenosyltransferase, found in Cupriavidus metallidurans (strain ATCC 43123 / DSM 2839 / NBRC 102507 / CH34) (Ralstonia metallidurans).